A 558-amino-acid chain; its full sequence is Eukaryotic translation initiation factor 3 subunit D (558 aa).

The segment at 296 to 310 (EFDLLTVNETSVEPP) is RNA gate. The tract at residues 534 to 558 (DNTFESEGEEEDSDEEEQVKDAFQR) is disordered. Residues 537 to 551 (FESEGEEEDSDEEEQ) are compositionally biased toward acidic residues.

It belongs to the eIF-3 subunit D family. Component of the eukaryotic translation initiation factor 3 (eIF-3) complex.

It localises to the cytoplasm. Functionally, mRNA cap-binding component of the eukaryotic translation initiation factor 3 (eIF-3) complex, which is involved in protein synthesis of a specialized repertoire of mRNAs and, together with other initiation factors, stimulates binding of mRNA and methionyl-tRNAi to the 40S ribosome. The eIF-3 complex specifically targets and initiates translation of a subset of mRNAs involved in cell proliferation. In the eIF-3 complex, eif3d specifically recognizes and binds the 7-methylguanosine cap of a subset of mRNAs. This chain is Eukaryotic translation initiation factor 3 subunit D, found in Nasonia vitripennis (Parasitic wasp).